The following is a 422-amino-acid chain: Phytoene synthase, chloroplastic (422 aa).

A chloroplast-targeting transit peptide spans 1–83 (MSLASSLVVS…GSVIVASMVA (83 aa)).

The protein belongs to the phytoene/squalene synthase family. In terms of assembly, monomer.

It localises to the plastid. The protein resides in the chloroplast. It carries out the reaction 2 (2E,6E,10E)-geranylgeranyl diphosphate = 15-cis-phytoene + 2 diphosphate. It functions in the pathway carotenoid biosynthesis; phytoene biosynthesis; all-trans-phytoene from geranylgeranyl diphosphate: step 1/1. Its function is as follows. Catalyzes the reaction from prephytoene diphosphate to phytoene. The sequence is that of Phytoene synthase, chloroplastic (PSY) from Cucumis melo (Muskmelon).